A 315-amino-acid polypeptide reads, in one-letter code: Putative methyltransferase NSUN5C (315 aa).

S-adenosyl-L-methionine contacts are provided by residues 50-56 (VPPQAIK), D74, R79, and D121. C175 acts as the Nucleophile in catalysis. The tract at residues 245–269 (TSASQAKASAPERTPSPAPKRKKRA) is disordered.

It belongs to the class I-like SAM-binding methyltransferase superfamily. RsmB/NOP family. In terms of tissue distribution, ubiquitous.

Its function is as follows. May have S-adenosyl-L-methionine-dependent methyl-transferase activity. The protein is Putative methyltransferase NSUN5C (NSUN5P2) of Homo sapiens (Human).